Reading from the N-terminus, the 407-residue chain is Peptidase T (407 aa).

Zn(2+) is bound at residue H81. Residue D83 is part of the active site. D142 contacts Zn(2+). E176 functions as the Proton acceptor in the catalytic mechanism. Residues E177, D199, and H381 each contribute to the Zn(2+) site.

The protein belongs to the peptidase M20B family. The cofactor is Zn(2+).

The protein resides in the cytoplasm. The enzyme catalyses Release of the N-terminal residue from a tripeptide.. Cleaves the N-terminal amino acid of tripeptides. The sequence is that of Peptidase T from Streptococcus pneumoniae (strain JJA).